A 225-amino-acid chain; its full sequence is uncharacterized protein (225 aa).

Helical transmembrane passes span 1-21 (MFIG…AKKV), 31-51 (SPLL…NVPY), 56-76 (LGGG…AIPL), 88-108 (VEII…TALI), 145-165 (VTAV…PMVI), and 205-225 (VSMI…LSFM).

It belongs to the YohK (E.coli)/YwbG (IPA-22R) (B.subtilis) family.

The protein localises to the cell membrane. This is an uncharacterized protein from Bacillus subtilis (strain 168).